The following is a 424-amino-acid chain: Virion nicking-joining enzyme (424 aa).

PLD phosphodiesterase domains lie at 110–137 and 320–346; these read LGGV…DWRS and YSRV…TGNY.

The protein belongs to the orthopoxvirus OPG042 family.

The protein resides in the virion. Functionally, DNA nicking enzyme that cleaves extruded cruciform DNA at its tip. Probably nicks viral hairpins. This Homo sapiens (Human) protein is Virion nicking-joining enzyme (OPG042).